The sequence spans 462 residues: Cysteine--tRNA ligase (462 aa).

Residue C27 participates in Zn(2+) binding. The 'HIGH' region motif lies at 29-39; sequence PTVYNYIHVGN. Residues C209, H234, and E238 each coordinate Zn(2+). The 'KMSKS' region motif lies at 266–270; sequence KMSKS. Residue K269 participates in ATP binding.

This sequence belongs to the class-I aminoacyl-tRNA synthetase family. Monomer. Requires Zn(2+) as cofactor.

It is found in the cytoplasm. It carries out the reaction tRNA(Cys) + L-cysteine + ATP = L-cysteinyl-tRNA(Cys) + AMP + diphosphate. The chain is Cysteine--tRNA ligase from Finegoldia magna (strain ATCC 29328 / DSM 20472 / WAL 2508) (Peptostreptococcus magnus).